The following is a 706-amino-acid chain: Septin ring organizing protein mid2 (706 aa).

Disordered regions lie at residues 62 to 102 (STAP…PFST) and 145 to 180 (DEAS…KKNP). Polar residues-rich tracts occupy residues 81–90 (YDQTLSNSSS) and 149–169 (NKSS…SNQG). Serine 379 carries the post-translational modification Phosphoserine. The PH domain maps to 583-688 (TLLCDGYLCQ…WMSTLRQHLG (106 aa)).

The protein belongs to the BUD4 family.

Its subcellular location is the cytoplasm. It localises to the cell cortex. It is found in the cytoskeleton. In terms of biological role, responsible for the proper stability and function of septins during cytokinesis. Required for the correct formation of the medial septin ring structure in mitosis and for the proper localization of endo-glucanases agn1 and eng1, which are needed for efficient cell separation. May act as a landmark for the localization of hydrolytic proteins to the medial region. The sequence is that of Septin ring organizing protein mid2 (mid2) from Schizosaccharomyces pombe (strain 972 / ATCC 24843) (Fission yeast).